Consider the following 117-residue polypeptide: Hainantoxin-XV-2 (117 aa).

Positions 1 to 20 (MKLCAVIIASLLVCVAVASS) are cleaved as a signal peptide. Residues 20 to 55 (SSDNQKEFAQEKEMTREETQSLGEHEKDDEVTGSEE) form a disordered region. The propeptide occupies 21–56 (SDNQKEFAQEKEMTREETQSLGEHEKDDEVTGSEER). Basic and acidic residues predominate over residues 23–55 (NQKEFAQEKEMTREETQSLGEHEKDDEVTGSEE). Intrachain disulfides connect Cys58–Cys72, Cys65–Cys78, Cys69–Cys115, and Cys71–Cys91.

Belongs to the neurotoxin 03 (Tx2) family. 02 subfamily. HNTX-XV sub-subfamily. As to expression, expressed by the venom gland.

It localises to the secreted. Its function is as follows. Putative ion channel inhibitor. The sequence is that of Hainantoxin-XV-2 from Cyriopagopus hainanus (Chinese bird spider).